A 180-amino-acid chain; its full sequence is Transcription factor IBH1-like 1 (180 aa).

One can recognise a bHLH domain in the interval 110–160; it reads KSKSASEEAAAKAKRLVKRRTQGLRNVVPGGELMSNDVLLLQETLDYIVSL.

Belongs to the bHLH protein family.

Its subcellular location is the nucleus. Its function is as follows. Functions redundandly with IBH1/BHLH158 in a regulation node known as the incoherent feed-forward loop (FFL). Acts as transcriptional repressor that negatively regulates cell and organ elongation in response to gibberellin (GA) and brassinosteroid (BR) signaling. In Arabidopsis thaliana (Mouse-ear cress), this protein is Transcription factor IBH1-like 1.